The sequence spans 962 residues: Glycine dehydrogenase (decarboxylating) (962 aa).

Lysine 709 carries the post-translational modification N6-(pyridoxal phosphate)lysine.

The protein belongs to the GcvP family. As to quaternary structure, the glycine cleavage system is composed of four proteins: P, T, L and H. Pyridoxal 5'-phosphate serves as cofactor.

It catalyses the reaction N(6)-[(R)-lipoyl]-L-lysyl-[glycine-cleavage complex H protein] + glycine + H(+) = N(6)-[(R)-S(8)-aminomethyldihydrolipoyl]-L-lysyl-[glycine-cleavage complex H protein] + CO2. The glycine cleavage system catalyzes the degradation of glycine. The P protein binds the alpha-amino group of glycine through its pyridoxal phosphate cofactor; CO(2) is released and the remaining methylamine moiety is then transferred to the lipoamide cofactor of the H protein. This Shewanella sp. (strain MR-7) protein is Glycine dehydrogenase (decarboxylating).